Reading from the N-terminus, the 507-residue chain is Tyrosine protein-kinase src-2 (507 aa).

Residues 1–10 are compositionally biased toward basic and acidic residues; it reads MGSCIGKEDP. A disordered region spans residues 1-52; that stretch reads MGSCIGKEDPPPGATSPVHTSSTLGRESLPSHPRIPSIGPIAASSSGNTIDK. The N-myristoyl glycine moiety is linked to residue glycine 2. A compositionally biased stretch (low complexity) spans 35–47; the sequence is IPSIGPIAASSSG. An SH3 domain is found at 57–118; it reads SQSANFVALF…PSNYVAREKS (62 aa). In terms of domain architecture, SH2 spans 124–216; the sequence is WYFGKMRRID…GLCVNLGAPC (93 aa). The 255-residue stretch at 240–494 folds into the Protein kinase domain; sequence VRLIRQIGAG…LQWKLEDLFN (255 aa). Residues 246-254 and lysine 268 each bind ATP; that span reads IGAGQFGEV. The Proton acceptor role is filled by aspartate 358. Tyrosine 500 is subject to Phosphotyrosine.

It belongs to the protein kinase superfamily. Tyr protein kinase family. SRC subfamily. Mg(2+) is required as a cofactor. It depends on Mn(2+) as a cofactor. Post-translationally, may be phosphorylated on Tyr-500 by csk-1. Expressed in vulva, cells around anus and pharyngeal muscles.

It catalyses the reaction L-tyrosyl-[protein] + ATP = O-phospho-L-tyrosyl-[protein] + ADP + H(+). With respect to regulation, may be inhibited by csk-1-mediated phosphorylation at Tyr-500. Its function is as follows. Non-receptor tyrosine-protein kinase which may play a role in larval and pharynx development. Unlike src-1, does not play a role in embryonic development. The polypeptide is Tyrosine protein-kinase src-2 (Caenorhabditis elegans).